Here is a 48-residue protein sequence, read N- to C-terminus: ATP synthase protein 8 (48 aa).

A helical membrane pass occupies residues leucine 12 to leucine 32.

This sequence belongs to the ATPase protein 8 family. As to quaternary structure, F-type ATPases have 2 components, CF(1) - the catalytic core - and CF(0) - the membrane proton channel.

It is found in the mitochondrion membrane. Its function is as follows. Mitochondrial membrane ATP synthase (F(1)F(0) ATP synthase or Complex V) produces ATP from ADP in the presence of a proton gradient across the membrane which is generated by electron transport complexes of the respiratory chain. F-type ATPases consist of two structural domains, F(1) - containing the extramembraneous catalytic core and F(0) - containing the membrane proton channel, linked together by a central stalk and a peripheral stalk. During catalysis, ATP synthesis in the catalytic domain of F(1) is coupled via a rotary mechanism of the central stalk subunits to proton translocation. Part of the complex F(0) domain. Minor subunit located with subunit a in the membrane. The polypeptide is ATP synthase protein 8 (ATP8) (Candida parapsilosis (Yeast)).